The sequence spans 237 residues: Dynein axonemal assembly factor 19 (237 aa).

Residues 8–33 (NFKALEKELQAALAADEKYKRENAAK) adopt a coiled-coil conformation.

The protein belongs to the DNAAF19/PR46b family. As to quaternary structure, homodimer.

Its subcellular location is the cytoplasm. The protein resides in the cell projection. It is found in the cilium. The protein localises to the flagellum. In terms of biological role, dynein-attachment factor required for cilia motility. This chain is Dynein axonemal assembly factor 19 (Dnaaf19), found in Mus musculus (Mouse).